Reading from the N-terminus, the 602-residue chain is Putative pentatricopeptide repeat-containing protein At1g12700, mitochondrial (602 aa).

The N-terminal 95 residues, 1 to 95, are a transit peptide targeting the mitochondrion; the sequence is MMIKRSITTN…PSLVDFSRFF (95 aa). PPR repeat units follow at residues 87-121, 122-156, 157-191, 192-226, 227-261, 262-296, 297-331, 332-366, 367-401, 402-436, 437-471, 472-506, 507-541, and 542-576; these read SLVD…GIAH, NIYT…GYEP, DTTT…GCQP, DVVT…NVKA, DVFT…GIKS, SVVT…EIVP, NVIT…GISP, NIIT…KCSP, DIVT…GLVA, NAVT…GVLP, DVMT…KMDL, GIVM…GVKP, NVMT…GNAP, and NDCT…GFSA.

It belongs to the PPR family. P subfamily.

The protein localises to the mitochondrion. The protein is Putative pentatricopeptide repeat-containing protein At1g12700, mitochondrial of Arabidopsis thaliana (Mouse-ear cress).